The chain runs to 991 residues: uncharacterized protein (991 aa).

The first 17 residues, 1 to 17, serve as a signal peptide directing secretion; sequence MLWPAALVAMFALAARA. 6 disordered regions span residues 332–352, 392–425, 469–511, 542–569, 587–641, and 658–734; these read DPLP…GETT, TTED…TTEG, EDST…EDTT, DTEA…TTPV, PAPT…NSLS, and ASSG…PPRI. The segment covering 400-413 has biased composition (low complexity); the sequence is TSTPTVTTVIDPTS. The span at 414 to 425 shows a compositional bias: polar residues; sequence GAVTTESRTTEG. Positions 472 to 493 are enriched in low complexity; that stretch reads TTTARAAEYPTPTTTTVEPRPA. Polar residues predominate over residues 542–554; the sequence is DTEAAQSATSISD. Low complexity-rich tracts occupy residues 556 to 569 and 598 to 615; these read VTPE…TTPV and ASTT…SHTP. Composition is skewed to polar residues over residues 617–628 and 658–667; these read PQESTSTPSRAP and ASSGPGASTG. Residues 668-682 are compositionally biased toward low complexity; that stretch reads ATTAPISPPWSASPA. Positions 686–710 are enriched in polar residues; it reads VTTSAARTLEPSSTRKAVAAESTTA.

This is an uncharacterized protein from Psittacid herpesvirus 1 (isolate Amazon parrot/-/97-0001/1997) (PsHV-1).